The sequence spans 350 residues: Ceramide synthase 1 (350 aa).

An N-acetylalanine modification is found at Ala2. 6 helical membrane-spanning segments follow: residues 53–73 (AHLA…WTAL), 103–123 (AWKF…LFGT), 148–168 (IAAA…ATLY), 176–196 (SVVM…SYAF), 239–259 (AADL…LYWF), and 287–307 (LLLL…AFAA). Residues 97 to 311 (AKMPESAWKF…IVAFAAKVLT (215 aa)) form the TLC domain.

In terms of processing, acetylated. Deacetylation by SIRT3 increases enzyme activity and promotes mitochondrial ceramide accumulation.

Its subcellular location is the endoplasmic reticulum membrane. It catalyses the reaction a sphingoid base + octadecanoyl-CoA = an N-octadecanoyl-sphingoid base + CoA + H(+). The enzyme catalyses sphinganine + octadecanoyl-CoA = N-(octadecanoyl)-sphinganine + CoA + H(+). The catalysed reaction is hexadecasphinganine + octadecanoyl-CoA = N-octadecanoylhexadecasphinganine + CoA + H(+). It carries out the reaction sphing-4-enine + octadecanoyl-CoA = N-octadecanoylsphing-4-enine + CoA + H(+). It catalyses the reaction heptadecasphing-4-enine + octadecanoyl-CoA = N-octadecanoyl-heptadecasphing-4-enine + CoA + H(+). The enzyme catalyses 2-hydroxyoctadecanoyl-CoA + sphinganine = N-(2-hydroxyoctadecanoyl)-sphinganine + CoA + H(+). The catalysed reaction is eicosanoyl-CoA + sphinganine = N-eicosanoylsphinganine + CoA + H(+). It participates in lipid metabolism; sphingolipid metabolism. Inhibited by fumonisin B1. In terms of biological role, ceramide synthase that catalyzes the transfer of the acyl chain from acyl-CoA to a sphingoid base, with high selectivity toward stearoyl-CoA (octadecanoyl-CoA; C18:0-CoA). N-acylates sphinganine and sphingosine bases to form dihydroceramides and ceramides in de novo synthesis and salvage pathways, respectively. Plays a predominant role in skeletal muscle in regulating C18 ceramide and dihydroceramide levels with an impact on whole-body glucose metabolism and insulin sensitivity. Protects from diet-induced obesity by suppressing the uptake of glucose in multiple organs in a FGF21-dependent way. Generates C18 ceramides in the brain, playing a critical role in cerebellar development and Purkinje cell function. In response to cellular stress mediates mitophagy, a known defense mechanism against cell transformation and aging. Upon mitochondria fission, generates C18 ceramides that anchor lipidated MAP1LC3B/LC3B-II autophagolysosomes to outer mitochondrial membranes to eliminate damaged mitochondria. The sequence is that of Ceramide synthase 1 from Homo sapiens (Human).